The chain runs to 218 residues: Flagellar calcium-binding protein TB-24 (218 aa).

The interval 1–27 is disordered; it reads MGCSASKDTTNSKDGAASKGGKDGKTT. 4 consecutive EF-hand domains span residues 48-83, 84-119, 130-165, and 167-202; these read ESKS…ILKL, DEFT…LVEF, YDIF…LKEW, and VDIT…KKLQ. Ca(2+)-binding residues include Asp-61, Asn-63, Thr-65, Lys-67, and Glu-72. Ca(2+) is bound by residues Asp-143, Asp-145, Ser-147, Glu-154, Asp-180, Asn-182, Ser-184, and Glu-191.

This sequence belongs to the calflagin family.

The protein localises to the cell projection. It is found in the cilium. It localises to the flagellum. Functionally, may contribute to the rapid motility of the trypanosomes, playing a role either in flagellar structure or in calcium metabolism. Could alternate between a GDP-bound inactive form to a calcium/GTP-bound active form. This chain is Flagellar calcium-binding protein TB-24, found in Trypanosoma brucei brucei.